The sequence spans 144 residues: Peroxisome assembly protein 22 (144 aa).

The helical transmembrane segment at 13-35 threads the bilayer; that stretch reads YGAVSLASLLVAASIVAYRWWNA.

This sequence belongs to the peroxin-22 family.

It is found in the peroxisome membrane. Functionally, involved in peroxisome biogenesis. The protein is Peroxisome assembly protein 22 (PEX22) of Eremothecium gossypii (strain ATCC 10895 / CBS 109.51 / FGSC 9923 / NRRL Y-1056) (Yeast).